Consider the following 423-residue polypeptide: MSIQIPRGTQDILPGTVELWQYIEGQAREICRRYNYKEIRTPIFEHTELFLRGVGDTTDIVQKEMYSFQDRGERSLTLRPEGTAPVVRSYVENKMFGDATQPTKLYYIGQMFRYERPQAGRYRQFVQFGIEAIGSNDPAIDAEVIALAVEFYRGMGLKNIKVVLNSLGDAASRQAHRDALIAHFEPRIGEFCSDCQSRLEKNPLRILDCKKDRNHELMGTAPSITEYLNEDSAVYYDKVQELLTMMDVPFEKDPNLVRGLDYYQHTVFEIMSEAEGFGAITTLSGGGRYNGLVQEIGGPEMPGIGFAMSIERLIMALKAENIELPIEHSIDCYVVALGEKAKDHAAKVAFDLRKAGLAVEKDYLDRKMKAQFKSADRLKAKFVAVLGEDELDKGIINLKDMATGEQEEVALDVFASYVAEKLI.

Belongs to the class-II aminoacyl-tRNA synthetase family. Homodimer.

The protein resides in the cytoplasm. The enzyme catalyses tRNA(His) + L-histidine + ATP = L-histidyl-tRNA(His) + AMP + diphosphate + H(+). This Bacillus anthracis protein is Histidine--tRNA ligase 2.